A 134-amino-acid polypeptide reads, in one-letter code: Thioredoxin H2-2 (134 aa).

The interval 1-20 (MGSFFSTMFTPPPAADDGGD) is disordered. The Thioredoxin domain maps to 3 to 130 (SFFSTMFTPP…LERKVNMFIS (128 aa)). Residues Cys56 and Cys59 each act as nucleophile in the active site. The cysteines at positions 56 and 59 are disulfide-linked.

Belongs to the thioredoxin family. Plant H-type subfamily.

It localises to the cytoplasm. Probable thiol-disulfide oxidoreductase that may be involved in the redox regulation of a number of cytosolic enzymes. In Oryza sativa subsp. japonica (Rice), this protein is Thioredoxin H2-2.